Consider the following 338-residue polypeptide: mRNA decay activator protein ZFP36L1 (338 aa).

The necessary and sufficient for the association with mRNA decay enzymes and mRNA decay activation stretch occupies residues 1-111 (MTTTLVSATI…QKQPGSGQVN (111 aa)). Position 54 is a phosphoserine; by MAPKAPK2 (Ser-54). Ser-90 is subject to Phosphoserine; by PKB/AKT1. Ser-92 is subject to Phosphoserine; by PKB/AKT1 and MAPKAPK2. The interval 93 to 113 (EGGERLLPTQKQPGSGQVNSS) is disordered. The span at 101-113 (TQKQPGSGQVNSS) shows a compositional bias: polar residues. 2 C3H1-type zinc fingers span residues 114–142 (RYKT…HGIH) and 152–180 (KYKT…HNAE). The segment at 185-338 (LAGGRDLSAD…IFSRLSISDD (154 aa)) is necessary for mRNA decay activation. At Ser-203 the chain carries Phosphoserine; by PKB/AKT1 and MAPKAPK2. Residues 273–338 (SPTTFLFRPM…IFSRLSISDD (66 aa)) are disordered. Low complexity predominate over residues 305 to 318 (YLSSSSSSHSGSDS). Ser-318 bears the Phosphoserine mark. A Phosphoserine; by RPS6KA1 modification is found at Ser-334.

Associates with the cytoplasmic CCR4-NOT deadenylase and RNA exosome complexes to trigger ARE-containing mRNA deadenylation and decay processes. Interacts with CNOT1. Interacts (via N-terminus) with CNOT6. Interacts with CNOT7; this interaction is inhibited in response to phorbol 12-myristate 13-acetate (PMA) treatment in a p38 MAPK-dependent manner. Interacts with DCP1A. Interacts (via N-terminus) with DCP2. Interacts (via N-terminus) with EXOSC2. Interacts with XRN1. Interacts (via phosphorylated form) with YWHAB; this interaction occurs in a protein kinase AKT1-dependent manner. Interacts (via phosphorylated form) with YWHAZ; this interaction occurs in a p38 MAPK- and AKT-signaling pathways. Phosphorylated. Phosphorylated by RPS6KA1 at Ser-334 upon phorbol 12-myristate 13-acetate (PMA) treatment; this phosphorylation results in dissociation of the CCR4-NOT deadenylase complex and induces p38 MAPK-mediated stabilization of the low-density lipoprotein receptor LDLR mRNA. Phosphorylated by protein kinase AKT1 at Ser-92 and Ser-203 in response to insulin; these phosphorylations stabilize ZFP36L1, increase the association with 14-3-3 proteins and mediate ARE-containing mRNA stabilization. AKT1-mediated phosphorylation at Ser-92 does not impair ARE-containing RNA-binding. Phosphorylated at Ser-54, Ser-92 and Ser-203 by MAPKAPK2; these phosphorylations increase the association with 14-3-3 proteins and mediate ARE-containing mRNA stabilization in a protein kinase AKT1-independent manner. MAPKAPK2-mediated phosphorylations at Ser-54, Ser-92 and Ser-203 do not impair ARE-containing RNA-binding. Phosphorylations increase the association with 14-3-3 proteins and mediate ARE-containing mRNA stabilization during early adipogenesis in a p38 MAPK- and AKT-dependent manner. Phosphorylated by protein kinase AKT1 at Ser-92. Post-translationally, ubiquitinated. Ubiquitination leads to proteasomal degradation, a process inhibited by phosphorylations at Ser-90, Ser-92 and Ser-203.

Its subcellular location is the nucleus. The protein localises to the cytoplasm. The protein resides in the cytoplasmic granule. It is found in the P-body. Functionally, zinc-finger RNA-binding protein that destabilizes several cytoplasmic AU-rich element (ARE)-containing mRNA transcripts by promoting their poly(A) tail removal or deadenylation, and hence provide a mechanism for attenuating protein synthesis. Acts as a 3'-untranslated region (UTR) ARE mRNA-binding adapter protein to communicate signaling events to the mRNA decay machinery. Functions by recruiting the CCR4-NOT deadenylase complex and components of the cytoplasmic RNA decay machinery to the bound ARE-containing mRNAs, and hence promotes ARE-mediated mRNA deadenylation and decay processes. Also induces the degradation of ARE-containing mRNAs even in absence of poly(A) tail. Binds to 3'-UTR ARE of numerous mRNAs. Positively regulates early adipogenesis by promoting ARE-mediated mRNA decay of immediate early genes (IEGs). Promotes ARE-mediated mRNA decay of mineralocorticoid receptor NR3C2 mRNA in response to hypertonic stress. Negatively regulates hematopoietic/erythroid cell differentiation by promoting ARE-mediated mRNA decay of the transcription factor STAT5B mRNA. Positively regulates monocyte/macrophage cell differentiation by promoting ARE-mediated mRNA decay of the cyclin-dependent kinase CDK6 mRNA. Promotes degradation of ARE-containing pluripotency-associated mRNAs in embryonic stem cells (ESCs), such as NANOG, through a fibroblast growth factor (FGF)-induced MAPK-dependent signaling pathway, and hence attenuates ESC self-renewal and positively regulates mesendoderm differentiation. May play a role in mediating pro-apoptotic effects in malignant B-cells by promoting ARE-mediated mRNA decay of BCL2 mRNA. In association with ZFP36L2 maintains quiescence on developing B lymphocytes by promoting ARE-mediated decay of several mRNAs encoding cell cycle regulators that help B cells progress through the cell cycle, and hence ensuring accurate variable-diversity-joining (VDJ) recombination and functional immune cell formation. Together with ZFP36L2 is also necessary for thymocyte development and prevention of T-cell acute lymphoblastic leukemia (T-ALL) transformation by promoting ARE-mediated mRNA decay of the oncogenic transcription factor NOTCH1 mRNA. Participates in the delivery of target ARE-mRNAs to processing bodies (PBs). In addition to its cytosolic mRNA-decay function, plays a role in the regulation of nuclear mRNA 3'-end processing; modulates mRNA 3'-end maturation efficiency of the DLL4 mRNA through binding with an ARE embedded in a weak noncanonical polyadenylation (poly(A)) signal in endothelial cells. Also involved in the regulation of stress granule (SG) and P-body (PB) formation and fusion. Plays a role in vasculogenesis and endocardial development. Plays a role in the regulation of keratinocyte proliferation, differentiation and apoptosis. Plays a role in myoblast cell differentiation. The chain is mRNA decay activator protein ZFP36L1 from Rattus norvegicus (Rat).